Here is a 190-residue protein sequence, read N- to C-terminus: Glycine cleavage system transcriptional repressor (190 aa).

2 ACT domains span residues 10–91 (VITA…PRPP) and 97–176 (WVQV…GSIN).

The protein resides in the cytoplasm. Negative transcriptional regulator of the glycine cleavage system operon (GCV). Does not autoregulate its own expression. It is not yet known how GcvR acts as a repressor. It does not seem to bind DNA. It could interact with GcvA and suppress its activatory activity. The polypeptide is Glycine cleavage system transcriptional repressor (gcvR) (Escherichia coli (strain K12)).